The sequence spans 695 residues: Potassium voltage-gated channel subfamily KQT member 4 (695 aa).

Residues 1–21 (MAEAPPRRLGLGPPPGDAPRA) are disordered. Topologically, residues 1–96 (MAEAPPRRLG…VYNVLERPRG (96 aa)) are cytoplasmic. Residue arginine 93 coordinates a 1,2-diacyl-sn-glycero-3-phospho-(1D-myo-inositol-4,5-bisphosphate). Residues 97–118 (WAFVYHVFIFLLVFSCLVLSVL) form a helical membrane-spanning segment. The Extracellular segment spans residues 119-129 (STIQEHQELAN). Residues 130-152 (ECLLILEFVMIVVFGLEYIVRVW) traverse the membrane as a helical segment. Over 153–168 (SAGCCCRYRGWQGRFR) the chain is Cytoplasmic. The helical transmembrane segment at 169-191 (FARKPFCVIDFIVFVASVAVIAA) threads the bilayer. Lysine 172 is an a 1,2-diacyl-sn-glycero-3-phospho-(1D-myo-inositol-4,5-bisphosphate) binding site. At 192–202 (GTQGNIFATSA) the chain is on the extracellular side. Residues 203–223 (LRSMRFLQILRMVRMDRRGGT) form a helical; Voltage-sensor membrane-spanning segment. A 1,2-diacyl-sn-glycero-3-phospho-(1D-myo-inositol-4,5-bisphosphate) is bound by residues arginine 219, arginine 220, lysine 225, and serine 235. Residues 224–235 (WKLLGSVVYAHS) lie on the Cytoplasmic side of the membrane. Residues 236 to 258 (KELITAWYIGFLVLIFASFLVYL) traverse the membrane as a helical segment. Residues 259-270 (AEKDANSDFSSY) are Extracellular-facing. The segment at residues 271 to 292 (ADSLWWGTITLTTIGYGDKTPH) is an intramembrane region (pore-forming). A topological domain (extracellular) is located at residue threonine 293. A helical transmembrane segment spans residues 294–322 (WLGRVLAAGFALLGISFFALPAGILGSGF). Residues 323–695 (ALKVQEQHRQ…ISRSVSTNMD (373 aa)) lie on the Cytoplasmic side of the membrane. The a 1,2-diacyl-sn-glycero-3-phospho-(1D-myo-inositol-4,5-bisphosphate) site is built by histidine 330 and lysine 333. The interaction with CALM stretch occupies residues 342–351 (AANLIQAAWR). 2 disordered regions span residues 400–480 (RRAP…TKVQ) and 496–515 (RLKP…AEEK). Composition is skewed to polar residues over residues 443–452 (GSSQRRTGPS) and 463–480 (TSPS…TKVQ). Positions 535–549 (RSIRILKFLVAKRKF) are interaction with CALM. Residues 546 to 650 (KRKFKETLRP…SRCLRSGTSA (105 aa)) are C-terminal assembly domain (tetramerization). Positions 587-606 (VGRGPGDRKAREKGDKGPSD) are disordered. The span at 591-605 (PGDRKAREKGDKGPS) shows a compositional bias: basic and acidic residues. A coiled-coil region spans residues 615-636 (MMGRVVKVEKQVQSIEHKLDLL).

This sequence belongs to the potassium channel family. KQT (TC 1.A.1.15) subfamily. Kv7.4/KCNQ4 sub-subfamily. Homotetramer. Interacts (via C-terminus) with calmodulin; forms a heterooctameric structure (with 4:4 KCNQ1:CALM stoichiometry); the interaction is calcium-independent, constitutive, participates in the proper assembly of a functional channel. The interaction with calcium-free CALM controls channel trafficking whereas interaction with calcium-bound CALM regulates channel gating. May form a functional heteromultimeric channel with KCNQ3. Interacts with HSP90AB1; promotes cell surface expression of KCNQ4. Expressed in the outer, but not the inner, sensory hair cells of the cochlea. Slightly expressed in heart, brain and skeletal muscle.

It is found in the basal cell membrane. It catalyses the reaction K(+)(in) = K(+)(out). With respect to regulation, two molecules of phosphatidylinositol-4,5-bisphosphate (PIP2-I and PIP2-II) are essential to activate KCNQ4 channel by inducing the coupling of the voltage-sensing domain (VSD) and the pore-forming domain (PD). Upon channel activation, PIP2-I and PIP2-II disrupt the VSD-calmodulin/CALM interaction, causing the release of CALM from the VSD which triggers the opening of the gate. Calcium suppresses KCNQ4 channel current through calcium-bound CALM C-terminus. Therefore CALM acts as calcium sensor that controls channel activity. ML213 potentiates KCNQ4 channel. KCNQ4 channel is blocked by linopirdin, XE991 and bepridil, whereas clofilium is without significant effect. Muscarinic agonist oxotremorine-M strongly suppress KCNQ4 current in CHO cells in which cloned KCNQ4 channels were coexpressed with M1 muscarinic receptors. Its function is as follows. Pore-forming subunit of the voltage-gated potassium (Kv) channel involved in the regulation of sensory cells excitability in the cochlea. KCNQ4/Kv7.4 channel is composed of 4 pore-forming subunits assembled as tetramers. Promotes the outflow of potassium ions in the repolarization phase of action potential which plays a role in regulating membrane potential of excitable cells. The channel conducts a slowly activating and deactivating current. Current often shows some inward rectification at positive potentials. Channel may be selectively permeable in vitro to other cations besides potassium, in decreasing order of affinity K(+) = Rb(+) &gt; Cs(+) &gt; Na(+). Important for normal physiological function of inner ear such as sensory perception of sound. The polypeptide is Potassium voltage-gated channel subfamily KQT member 4 (Homo sapiens (Human)).